The sequence spans 248 residues: PF03932 family protein CutC (248 aa).

Belongs to the CutC family. As to quaternary structure, homodimer.

The protein resides in the cytoplasm. This chain is PF03932 family protein CutC, found in Escherichia coli O9:H4 (strain HS).